A 168-amino-acid chain; its full sequence is Transcription antitermination protein NusB (168 aa).

The protein belongs to the NusB family.

In terms of biological role, involved in transcription antitermination. Required for transcription of ribosomal RNA (rRNA) genes. Binds specifically to the boxA antiterminator sequence of the ribosomal RNA (rrn) operons. This is Transcription antitermination protein NusB from Chlamydia trachomatis serovar L2 (strain ATCC VR-902B / DSM 19102 / 434/Bu).